Here is a 241-residue protein sequence, read N- to C-terminus: Ribose-5-phosphate isomerase A (241 aa).

Substrate is bound by residues 29 to 32 (TGTT), 84 to 87 (DGAD), and 97 to 100 (KGGG). The active-site Proton acceptor is E106. K124 is a binding site for substrate.

The protein belongs to the ribose 5-phosphate isomerase family. As to quaternary structure, homodimer.

It catalyses the reaction aldehydo-D-ribose 5-phosphate = D-ribulose 5-phosphate. The protein operates within carbohydrate degradation; pentose phosphate pathway; D-ribose 5-phosphate from D-ribulose 5-phosphate (non-oxidative stage): step 1/1. In terms of biological role, catalyzes the reversible conversion of ribose-5-phosphate to ribulose 5-phosphate. The polypeptide is Ribose-5-phosphate isomerase A (Thermoplasma acidophilum (strain ATCC 25905 / DSM 1728 / JCM 9062 / NBRC 15155 / AMRC-C165)).